Here is a 502-residue protein sequence, read N- to C-terminus: UPF0371 protein CLH_2534 (502 aa).

It belongs to the UPF0371 family.

The sequence is that of UPF0371 protein CLH_2534 from Clostridium botulinum (strain Alaska E43 / Type E3).